The following is a 148-amino-acid chain: Natriuretic peptide BF131 (148 aa).

An N-terminal signal peptide occupies residues 1–27; sequence MVGPSRLAGGGLLLLLLLALLPLALDG. A propeptide spanning residues 28-83 is cleaved from the precursor; the sequence is KPAPPPQALPKDPAAASAAERIMRALLPDSKSSRPATDRMVHPEHQAGGGDTRRLQ. Disordered stretches follow at residues 54-83 and 105-127; these read LPDSKSSRPATDRMVHPEHQAGGGDTRRLQ and TSDMGCRHRKDPPRAPPAAPSAA. Basic and acidic residues predominate over residues 63-83; sequence ATDRMVHPEHQAGGGDTRRLQ. Residues Cys94 and Cys110 are joined by a disulfide bond. The propeptide occupies 130-148; it reads AVTWLIRDLRADSKQSRAA.

The protein belongs to the natriuretic peptide family. In terms of tissue distribution, expressed by the venom gland.

It localises to the secreted. In terms of biological role, natriuretic peptide that dose-dependently induces the rapid relaxation of rat aortic strips phenylephrine-precontracted. Acts by stimulating cGMP production in a dose-dependent manner (by probably activating NPR1 and/or NPR2). May also show potent hypotensive effects. The polypeptide is Natriuretic peptide BF131 (Bungarus flaviceps flaviceps (Red-headed krait)).